The sequence spans 746 residues: Centromere protein I (746 aa).

A disordered region spans residues 1–24 (MATQRVTRNSQQQNRISQGSNSRQ).

It belongs to the CENP-I/CTF3 family. As to quaternary structure, component of the CENPA-CAD complex, composed of CENPI, CENPK, CENPL, CENPO, CENPP, CENPQ, CENPR and CENPS. The CENPA-CAD complex interacts with the CENPA-NAC complex, at least composed of CENPA, CENPC, CENPH, CENPM, CENPN, CENPT and CENPU. Interacts with SENP6. In terms of processing, sumoylated. Sumoylated form can be polyubiquitinated by RNF4, leading to its degradation. Desumoylation by SENP6 prevents its degradation.

It localises to the nucleus. It is found in the chromosome. The protein resides in the centromere. Its function is as follows. Component of the CENPA-CAD (nucleosome distal) complex, a complex recruited to centromeres which is involved in assembly of kinetochore proteins, mitotic progression and chromosome segregation. May be involved in incorporation of newly synthesized CENPA into centromeres via its interaction with the CENPA-NAC complex. Required for the localization of CENPF, MAD1L1 and MAD2 (MAD2L1 or MAD2L2) to kinetochores. Involved in the response of gonadal tissues to follicle-stimulating hormone. The chain is Centromere protein I (Cenpi) from Mus musculus (Mouse).